The sequence spans 173 residues: Photosystem I assembly protein Ycf3 (173 aa).

3 TPR repeats span residues 35–68 (AYLYYRKGLAAQNDGDYSEALEYYEESLKLEDNQ), 72–105 (GETLKNMAIIYMSNGDEERAINTYKKALGQNPKQ), and 120–153 (GRMAQRNGNQDECDIWFDQAAEVWSKAVRLYPGG).

This sequence belongs to the Ycf3 family.

Its subcellular location is the cellular thylakoid membrane. Functionally, essential for the assembly of the photosystem I (PSI) complex. May act as a chaperone-like factor to guide the assembly of the PSI subunits. The sequence is that of Photosystem I assembly protein Ycf3 from Prochlorococcus marinus (strain NATL2A).